We begin with the raw amino-acid sequence, 426 residues long: RuvB-like protein 1 (426 aa).

An ATP-binding site is contributed by glycine 62–threonine 69.

It belongs to the RuvB family. In terms of assembly, component of the SWR1 chromatin remodeling complex, the INO80 chromatin remodeling complex, and of the R2TP complex.

It localises to the nucleus. The enzyme catalyses ATP + H2O = ADP + phosphate + H(+). Functionally, DNA helicase which participates in several chromatin remodeling complexes, including the SWR1 and the INO80 complexes. The SWR1 complex mediates the ATP-dependent exchange of histone H2A for the H2A variant HZT1 leading to transcriptional regulation of selected genes by chromatin remodeling. The INO80 complex remodels chromatin by shifting nucleosomes and is involved in DNA repair. Also involved in pre-rRNA processing. This is RuvB-like protein 1 (RVB1) from Encephalitozoon cuniculi (strain GB-M1) (Microsporidian parasite).